The sequence spans 143 residues: Large ribosomal subunit protein uL11 (143 aa).

The protein belongs to the universal ribosomal protein uL11 family. As to quaternary structure, part of the ribosomal stalk of the 50S ribosomal subunit. Interacts with L10 and the large rRNA to form the base of the stalk. L10 forms an elongated spine to which L12 dimers bind in a sequential fashion forming a multimeric L10(L12)X complex. Post-translationally, one or more lysine residues are methylated.

Forms part of the ribosomal stalk which helps the ribosome interact with GTP-bound translation factors. The sequence is that of Large ribosomal subunit protein uL11 from Rhizobium johnstonii (strain DSM 114642 / LMG 32736 / 3841) (Rhizobium leguminosarum bv. viciae).